The following is a 215-amino-acid chain: MSKAIVLDSHLKEKGSVELPKRYEGINSHNLYLYVKHYLSSVRANTAKSKNRAEVSGGGRKPWAQKGGGRARAGSITSPVFVGGGVSHGATNKRNYNLKINKKQKRLALEYALEEKAQANKLFVVEKIAIKGVVEDNKRKHLTKEANQMFQALEQRDTLFVCLNMDECTELAFSNLKKCLIIDVNELNAYLLAAFSSVVMEEAAFQHVVQDKTEE.

Positions Thr-46–Ile-76 are disordered. The segment covering Ser-56–Ala-71 has biased composition (gly residues).

This sequence belongs to the universal ribosomal protein uL4 family. In terms of assembly, part of the 50S ribosomal subunit.

Functionally, one of the primary rRNA binding proteins, this protein initially binds near the 5'-end of the 23S rRNA. It is important during the early stages of 50S assembly. It makes multiple contacts with different domains of the 23S rRNA in the assembled 50S subunit and ribosome. Forms part of the polypeptide exit tunnel. In Helicobacter pylori (strain HPAG1), this protein is Large ribosomal subunit protein uL4.